The primary structure comprises 329 residues: MATPHHSRRGSMAYYPRVRAKRIQGDIRSWPEIEGQTKVQAFAGYKVGMTHIQMVDYRKNSVTAGQVIMAPVTVVEVPPLTVMSIRYYARGDNGLEVISEEWAENIDKDVLRRINKINRHKKGIEVKDVDDVRLMVHTNPQLVSGVPSKTPEIFEIRIGGSTIENRIKYAKERLGSNISFSDFSKPGNFVDVIAVTKGKGFQGVVKRFGVKLLPRKNRKHRRMIGTLGPWHPDWVRNTVPQAGQVGFHQRTIHNIRIIKFDTKDHVDDINVKGGFLNYGIVRNDYVLLFGSVPGPAKRLIKMRDPARQTRPAVESIEVTYVSRESKQGD.

It belongs to the universal ribosomal protein uL3 family. Part of the 50S ribosomal subunit. Forms a cluster with proteins L14 and L24e.

Its function is as follows. One of the primary rRNA binding proteins, it binds directly near the 3'-end of the 23S rRNA, where it nucleates assembly of the 50S subunit. In Picrophilus torridus (strain ATCC 700027 / DSM 9790 / JCM 10055 / NBRC 100828 / KAW 2/3), this protein is Large ribosomal subunit protein uL3.